Consider the following 361-residue polypeptide: Carbamoyl phosphate synthase small chain (361 aa).

The interval 1–173 (MRAALALEDG…SVREEYRFSD (173 aa)) is CPSase. L-glutamine contacts are provided by serine 45, glycine 225, and glycine 227. The 185-residue stretch at 177–361 (EIVVIDCGVK…DEFLAMCREH (185 aa)) folds into the Glutamine amidotransferase type-1 domain. Cysteine 252 functions as the Nucleophile in the catalytic mechanism. 5 residues coordinate L-glutamine: leucine 253, glutamine 256, asparagine 294, glycine 296, and phenylalanine 297. Active-site residues include histidine 337 and glutamate 339.

The protein belongs to the CarA family. As to quaternary structure, composed of two chains; the small (or glutamine) chain promotes the hydrolysis of glutamine to ammonia, which is used by the large (or ammonia) chain to synthesize carbamoyl phosphate. Tetramer of heterodimers (alpha,beta)4.

The catalysed reaction is hydrogencarbonate + L-glutamine + 2 ATP + H2O = carbamoyl phosphate + L-glutamate + 2 ADP + phosphate + 2 H(+). It catalyses the reaction L-glutamine + H2O = L-glutamate + NH4(+). It participates in amino-acid biosynthesis; L-arginine biosynthesis; carbamoyl phosphate from bicarbonate: step 1/1. It functions in the pathway pyrimidine metabolism; UMP biosynthesis via de novo pathway; (S)-dihydroorotate from bicarbonate: step 1/3. In terms of biological role, small subunit of the glutamine-dependent carbamoyl phosphate synthetase (CPSase). CPSase catalyzes the formation of carbamoyl phosphate from the ammonia moiety of glutamine, carbonate, and phosphate donated by ATP, constituting the first step of 2 biosynthetic pathways, one leading to arginine and/or urea and the other to pyrimidine nucleotides. The small subunit (glutamine amidotransferase) binds and cleaves glutamine to supply the large subunit with the substrate ammonia. This is Carbamoyl phosphate synthase small chain from Methanopyrus kandleri (strain AV19 / DSM 6324 / JCM 9639 / NBRC 100938).